The chain runs to 224 residues: MATDIARLIDHTLLKADATKEQILQLCKEAQTYQFASVCINPYWVKLAAEQLKEDKHVAVCTVIGFPLGQSTPETKAFETKNAIANGATEVDMVINIAALKDKQDQMVLNDIRAVVDAAKDKALTKVILETCLLTNEEKERACALAVQAGADYVKTSTGFSTGGATVEDIALMRRVVGADVGVKASGGIRDLAAVNAMVEAGATRIGASAGVAIVTGATGSSGY.

Asp-92 acts as the Proton donor/acceptor in catalysis. Lys-155 acts as the Schiff-base intermediate with acetaldehyde in catalysis. The active-site Proton donor/acceptor is the Lys-184.

The protein belongs to the DeoC/FbaB aldolase family. DeoC type 1 subfamily.

It localises to the cytoplasm. It catalyses the reaction 2-deoxy-D-ribose 5-phosphate = D-glyceraldehyde 3-phosphate + acetaldehyde. Its pathway is carbohydrate degradation; 2-deoxy-D-ribose 1-phosphate degradation; D-glyceraldehyde 3-phosphate and acetaldehyde from 2-deoxy-alpha-D-ribose 1-phosphate: step 2/2. In terms of biological role, catalyzes a reversible aldol reaction between acetaldehyde and D-glyceraldehyde 3-phosphate to generate 2-deoxy-D-ribose 5-phosphate. This chain is Deoxyribose-phosphate aldolase, found in Shouchella clausii (strain KSM-K16) (Alkalihalobacillus clausii).